Reading from the N-terminus, the 607-residue chain is Proteasome-associated ATPase (607 aa).

Residues 1 to 17 show a composition bias toward basic and acidic residues; it reads MTESDRHDTPKGDRRIS. The interval 1 to 65 is disordered; sequence MTESDRHDTP…GRPAADNKEL (65 aa). A coiled-coil region spans residues 59 to 102; the sequence is AADNKELQERVDNLTARNAKLLDTLKDARQQLVALREEVDRLGQ. 294–299 is an ATP binding site; it reads GCGKTL. Residues 606–607 are docks into pockets in the proteasome alpha-ring; it reads YL.

It belongs to the AAA ATPase family. As to quaternary structure, homohexamer. Assembles into a hexameric ring structure that caps the 20S proteasome core. Strongly interacts with the prokaryotic ubiquitin-like protein Pup through a hydrophobic interface; the interacting region of ARC lies in its N-terminal coiled-coil domain. There is one Pup binding site per ARC hexamer ring. Upon ATP-binding, the C-terminus of ARC interacts with the alpha-rings of the proteasome core, possibly by binding to the intersubunit pockets.

The protein operates within protein degradation; proteasomal Pup-dependent pathway. Its function is as follows. ATPase which is responsible for recognizing, binding, unfolding and translocation of pupylated proteins into the bacterial 20S proteasome core particle. May be essential for opening the gate of the 20S proteasome via an interaction with its C-terminus, thereby allowing substrate entry and access to the site of proteolysis. Thus, the C-termini of the proteasomal ATPase may function like a 'key in a lock' to induce gate opening and therefore regulate proteolysis. In Gordonia bronchialis (strain ATCC 25592 / DSM 43247 / BCRC 13721 / JCM 3198 / KCTC 3076 / NBRC 16047 / NCTC 10667) (Rhodococcus bronchialis), this protein is Proteasome-associated ATPase.